The following is a 383-amino-acid chain: GTP-binding protein 10 homolog (383 aa).

Positions 22-157 constitute an Obg domain; sequence PSFLDTLRLA…RIVNLDLKLI (136 aa). Positions 158–353 constitute an OBG-type G domain; sequence ADVGLVGFPN…VKSQLRRTLV (196 aa). GTP-binding positions include 164-171, 211-215, and 287-290; these read GFPNAGKS, DLPGL, and NKMD.

It belongs to the TRAFAC class OBG-HflX-like GTPase superfamily. OBG GTPase family.

The protein resides in the nucleus. It is found in the nucleolus. May be involved in the ribosome maturation process. The protein is GTP-binding protein 10 homolog of Drosophila pseudoobscura pseudoobscura (Fruit fly).